The chain runs to 226 residues: Orotate phosphoribosyltransferase (226 aa).

5-phospho-alpha-D-ribose 1-diphosphate is bound by residues lysine 26, 73–74 (YK), arginine 100, lysine 101, lysine 104, histidine 106, and 128–136 (EDVTTSGKS). Threonine 132 and arginine 161 together coordinate orotate.

This sequence belongs to the purine/pyrimidine phosphoribosyltransferase family. PyrE subfamily. In terms of assembly, homodimer. The cofactor is Mg(2+).

The catalysed reaction is orotidine 5'-phosphate + diphosphate = orotate + 5-phospho-alpha-D-ribose 1-diphosphate. The protein operates within pyrimidine metabolism; UMP biosynthesis via de novo pathway; UMP from orotate: step 1/2. In terms of biological role, catalyzes the transfer of a ribosyl phosphate group from 5-phosphoribose 1-diphosphate to orotate, leading to the formation of orotidine monophosphate (OMP). The protein is Orotate phosphoribosyltransferase of Agathobacter rectalis (strain ATCC 33656 / DSM 3377 / JCM 17463 / KCTC 5835 / VPI 0990) (Eubacterium rectale).